The following is a 367-amino-acid chain: Glutamate 5-kinase (367 aa).

Lys17 lines the ATP pocket. Ser57, Asp144, and Asn156 together coordinate substrate. Residues 176-177 (SD) and 217-223 (TGGMVSK) each bind ATP. Residues 279–357 (VGSLTLDEGA…SELPCELRRP (79 aa)) form the PUA domain.

Belongs to the glutamate 5-kinase family.

The protein resides in the cytoplasm. The enzyme catalyses L-glutamate + ATP = L-glutamyl 5-phosphate + ADP. It participates in amino-acid biosynthesis; L-proline biosynthesis; L-glutamate 5-semialdehyde from L-glutamate: step 1/2. Functionally, catalyzes the transfer of a phosphate group to glutamate to form L-glutamate 5-phosphate. The protein is Glutamate 5-kinase of Mycobacterium leprae (strain Br4923).